The following is a 34-amino-acid chain: Protamine-Y1/Y2 (34 aa).

The disordered stretch occupies residues 1 to 34 (PRRRRQASRPVRRRRRYRRSTAARRRRRVVRRRR).

Testis.

The protein resides in the nucleus. It localises to the chromosome. Protamines substitute for histones in the chromatin of sperm during the haploid phase of spermatogenesis. They compact sperm DNA into a highly condensed, stable and inactive complex. This Thunnus thynnus (Atlantic bluefin tuna) protein is Protamine-Y1/Y2.